We begin with the raw amino-acid sequence, 246 residues long: 4-hydroxy-tetrahydrodipicolinate reductase (246 aa).

NAD(+)-binding positions include 8 to 13, aspartate 34, 74 to 76, and 101 to 104; these read GALGRM, GTT, and APNF. The active-site Proton donor/acceptor is the histidine 131. Residue histidine 132 coordinates (S)-2,3,4,5-tetrahydrodipicolinate. Lysine 135 serves as the catalytic Proton donor. 141–142 contributes to the (S)-2,3,4,5-tetrahydrodipicolinate binding site; that stretch reads GT.

Belongs to the DapB family.

The protein localises to the cytoplasm. It catalyses the reaction (S)-2,3,4,5-tetrahydrodipicolinate + NAD(+) + H2O = (2S,4S)-4-hydroxy-2,3,4,5-tetrahydrodipicolinate + NADH + H(+). The enzyme catalyses (S)-2,3,4,5-tetrahydrodipicolinate + NADP(+) + H2O = (2S,4S)-4-hydroxy-2,3,4,5-tetrahydrodipicolinate + NADPH + H(+). It participates in amino-acid biosynthesis; L-lysine biosynthesis via DAP pathway; (S)-tetrahydrodipicolinate from L-aspartate: step 4/4. Its function is as follows. Catalyzes the conversion of 4-hydroxy-tetrahydrodipicolinate (HTPA) to tetrahydrodipicolinate. In Thermobifida fusca (strain YX), this protein is 4-hydroxy-tetrahydrodipicolinate reductase.